Here is a 194-residue protein sequence, read N- to C-terminus: ATP-dependent Clp protease proteolytic subunit (194 aa).

Residue Ser98 is the Nucleophile of the active site. Residue His123 is part of the active site.

This sequence belongs to the peptidase S14 family. In terms of assembly, fourteen ClpP subunits assemble into 2 heptameric rings which stack back to back to give a disk-like structure with a central cavity, resembling the structure of eukaryotic proteasomes.

The protein localises to the cytoplasm. The catalysed reaction is Hydrolysis of proteins to small peptides in the presence of ATP and magnesium. alpha-casein is the usual test substrate. In the absence of ATP, only oligopeptides shorter than five residues are hydrolyzed (such as succinyl-Leu-Tyr-|-NHMec, and Leu-Tyr-Leu-|-Tyr-Trp, in which cleavage of the -Tyr-|-Leu- and -Tyr-|-Trp bonds also occurs).. Functionally, cleaves peptides in various proteins in a process that requires ATP hydrolysis. Has a chymotrypsin-like activity. Plays a major role in the degradation of misfolded proteins. This is ATP-dependent Clp protease proteolytic subunit from Alkaliphilus metalliredigens (strain QYMF).